A 373-amino-acid polypeptide reads, in one-letter code: P2Y purinoceptor 1 (373 aa).

The Extracellular portion of the chain corresponds to 1 to 51 (MTEVLWPAVPNGTDTAFLADPGSPWGNSTVTSTAAVASPFKCALTKTGFQF). N-linked (GlcNAc...) asparagine glycosylation is found at Asn-11 and Asn-27. 2 disulfide bridges follow: Cys-42-Cys-296 and Cys-124-Cys-202. Lys-46 contributes to the ADP binding site. Residues 52-74 (YYLPAVYILVFIIGFLGNSVAIW) form a helical membrane-spanning segment. Topologically, residues 75–87 (MFVFHMKPWSGIS) are cytoplasmic. A helical transmembrane segment spans residues 88–109 (VYMFNLALADFLYVLTLPALIF). The Extracellular segment spans residues 110-125 (YYFNKTDWIFGDAMCK). Residue Asn-113 is glycosylated (N-linked (GlcNAc...) asparagine). A helical membrane pass occupies residues 126–147 (LQRFIFHVNLYGSILFLTCISA). The Cytoplasmic portion of the chain corresponds to 148 to 166 (HRYSGVVYPLKSLGRLKKK). Residues 167–188 (NAVYISVLVWLIVVVGISPILF) traverse the membrane as a helical segment. Topologically, residues 189–214 (YSGTGIRKNKTITCYDTTSDEYLRSY) are extracellular. The N-linked (GlcNAc...) asparagine glycan is linked to Asn-197. 203–205 (YDT) contacts ADP. A helical transmembrane segment spans residues 215–237 (FIYSMCTTVAMFCVPLVLILGCY). The Cytoplasmic portion of the chain corresponds to 238-260 (GLIVRALIYKDLDNSPLRRKSIY). A helical membrane pass occupies residues 261 to 284 (LVIIVLTVFAVSYIPFHVMKTMNL). ADP contacts are provided by residues 283 to 287 (NLRAR), 303 to 306 (YATY), and Arg-310. The Extracellular segment spans residues 285-303 (RARLDFQTPEMCAFNDRVY). The helical transmembrane segment at 304–325 (ATYQVTRGLASLNSCVDPILYF) threads the bilayer. Residues 326 to 373 (LAGDTFRRRLSRATRKASRRSEANLQSKSEDMTLNILSEFKQNGDTSL) are Cytoplasmic-facing.

The protein belongs to the G-protein coupled receptor 1 family.

It is found in the cell membrane. Functionally, receptor for extracellular adenine nucleotides such as ADP. In platelets, binding to ADP leads to mobilization of intracellular calcium ions via activation of phospholipase C, a change in platelet shape, and ultimately platelet aggregation. This Bos taurus (Bovine) protein is P2Y purinoceptor 1 (P2RY1).